A 291-amino-acid polypeptide reads, in one-letter code: ATP synthase gamma chain (291 aa).

It belongs to the ATPase gamma chain family. In terms of assembly, F-type ATPases have 2 components, CF(1) - the catalytic core - and CF(0) - the membrane proton channel. CF(1) has five subunits: alpha(3), beta(3), gamma(1), delta(1), epsilon(1). CF(0) has three main subunits: a, b and c.

Its subcellular location is the cell inner membrane. Produces ATP from ADP in the presence of a proton gradient across the membrane. The gamma chain is believed to be important in regulating ATPase activity and the flow of protons through the CF(0) complex. This chain is ATP synthase gamma chain, found in Burkholderia mallei (strain NCTC 10247).